We begin with the raw amino-acid sequence, 527 residues long: Heat shock factor protein HSF8 (527 aa).

Residues 39 to 133 mediate DNA binding; it reads PFLVKTYDMV…KSISRRKPAH (95 aa). 3 disordered regions span residues 128–158, 241–273, and 297–341; these read RRKP…HSAS, NESN…ADGQ, and SSPR…TSGK. Low complexity predominate over residues 134–152; it reads GHAQQQQQPHGNAQQQMQP. Polar residues predominate over residues 317 to 326; sequence SPQSNASSGR.

Belongs to the HSF family. Homotrimer. Exhibits temperature-dependent phosphorylation.

The protein localises to the nucleus. DNA-binding protein that specifically binds heat shock promoter elements (HSE) and activates transcription. This is Heat shock factor protein HSF8 (HSF8) from Solanum lycopersicum (Tomato).